Reading from the N-terminus, the 87-residue chain is NADH dehydrogenase [ubiquinone] 1 alpha subcomplex subunit 4-like 2 (87 aa).

It belongs to the complex I NDUFA4 subunit family.

The sequence is that of NADH dehydrogenase [ubiquinone] 1 alpha subcomplex subunit 4-like 2 (NDUFA4L2) from Bos taurus (Bovine).